The chain runs to 101 residues: Urease subunit beta (101 aa).

This sequence belongs to the urease beta subunit family. In terms of assembly, heterotrimer of UreA (gamma), UreB (beta) and UreC (alpha) subunits. Three heterotrimers associate to form the active enzyme.

It localises to the cytoplasm. It carries out the reaction urea + 2 H2O + H(+) = hydrogencarbonate + 2 NH4(+). The protein operates within nitrogen metabolism; urea degradation; CO(2) and NH(3) from urea (urease route): step 1/1. This is Urease subunit beta from Sinorhizobium fredii (strain NBRC 101917 / NGR234).